Reading from the N-terminus, the 312-residue chain is Olfactory receptor 8H3 (312 aa).

The Extracellular segment spans residues M1 to M26. The N-linked (GlcNAc...) asparagine glycan is linked to N6. The helical transmembrane segment at A27–L47 threads the bilayer. Topologically, residues L48–Q55 are cytoplasmic. Residues L56–T76 traverse the membrane as a helical segment. Residues V77–A99 lie on the Extracellular side of the membrane. C97 and C189 form a disulfide bridge. A helical membrane pass occupies residues Q100 to Y120. The Cytoplasmic segment spans residues D121–R139. The helical transmembrane segment at L140 to V160 threads the bilayer. Topologically, residues V161–M197 are extracellular. Residues L198 to S217 traverse the membrane as a helical segment. Over Y218 to A237 the chain is Cytoplasmic. Residues F238–T258 form a helical membrane-spanning segment. The Extracellular segment spans residues Y259–D271. A helical membrane pass occupies residues Q272 to L292. Topologically, residues R293–R312 are cytoplasmic.

It belongs to the G-protein coupled receptor 1 family.

It localises to the cell membrane. Its function is as follows. Odorant receptor. This chain is Olfactory receptor 8H3 (OR8H3), found in Homo sapiens (Human).